Reading from the N-terminus, the 414-residue chain is Thyroid hormone receptor beta-B (414 aa).

Positions 1 to 59 are modulating; sequence MPSSMSVRLFTASAAQRKKIQEGDCCVVLAGKTQGRFILIGAVARVSGYIPSYLDKDEL. NR C4-type zinc fingers lie at residues 60–80 and 98–122; these read CVVCGDKATGYHYRCITCEGC and CKYEGKCVIDKVTRNQCQECRFKKC. The nuclear receptor DNA-binding region spans 60 to 134; the sequence is CVVCGDKATG…VGMATDLVLD (75 aa). An NR LBD domain is found at 170–414; it reads EEWELIQVVT…PPLFLEVFED (245 aa).

The protein belongs to the nuclear hormone receptor family. NR1 subfamily.

The protein resides in the nucleus. Functionally, high affinity receptor for triiodothyronine (T3). The polypeptide is Thyroid hormone receptor beta-B (thrb-b) (Xenopus laevis (African clawed frog)).